We begin with the raw amino-acid sequence, 103 residues long: Large ribosomal subunit protein bL21 (103 aa).

Belongs to the bacterial ribosomal protein bL21 family. Part of the 50S ribosomal subunit. Contacts protein L20.

Its function is as follows. This protein binds to 23S rRNA in the presence of protein L20. The protein is Large ribosomal subunit protein bL21 of Hahella chejuensis (strain KCTC 2396).